The sequence spans 696 residues: Polyribonucleotide nucleotidyltransferase (696 aa).

Positions 483 and 489 each coordinate Mg(2+). A KH domain is found at 550-609 (PRITTIYVKTDKIRDVIGSGGKNIRGITEATGVTIDIDDTGKINIASTDKAACDMAIKMI). Residues 619 to 687 (GKLYMGLVKK…KQGKIKLSRK (69 aa)) form the S1 motif domain.

This sequence belongs to the polyribonucleotide nucleotidyltransferase family. The cofactor is Mg(2+).

Its subcellular location is the cytoplasm. The enzyme catalyses RNA(n+1) + phosphate = RNA(n) + a ribonucleoside 5'-diphosphate. In terms of biological role, involved in mRNA degradation. Catalyzes the phosphorolysis of single-stranded polyribonucleotides processively in the 3'- to 5'-direction. The protein is Polyribonucleotide nucleotidyltransferase of Geotalea daltonii (strain DSM 22248 / JCM 15807 / FRC-32) (Geobacter daltonii).